The chain runs to 284 residues: Ribose-5-phosphate isomerase (284 aa).

It belongs to the ribose 5-phosphate isomerase family.

The protein resides in the cytoplasm. It carries out the reaction aldehydo-D-ribose 5-phosphate = D-ribulose 5-phosphate. It functions in the pathway carbohydrate degradation; pentose phosphate pathway; D-ribose 5-phosphate from D-ribulose 5-phosphate (non-oxidative stage): step 1/1. The polypeptide is Ribose-5-phosphate isomerase (RKI1) (Lodderomyces elongisporus (strain ATCC 11503 / CBS 2605 / JCM 1781 / NBRC 1676 / NRRL YB-4239) (Yeast)).